Here is a 213-residue protein sequence, read N- to C-terminus: NADH-quinone oxidoreductase subunit I (213 aa).

2 4Fe-4S ferredoxin-type domains span residues 74–103 and 113–142; these read RFIE…METS and GNYS…HGIE. Cysteine 83, cysteine 86, cysteine 89, cysteine 93, cysteine 122, cysteine 125, cysteine 128, and cysteine 132 together coordinate [4Fe-4S] cluster.

This sequence belongs to the complex I 23 kDa subunit family. In terms of assembly, NDH-1 is composed of 14 different subunits. Subunits NuoA, H, J, K, L, M, N constitute the membrane sector of the complex. The cofactor is [4Fe-4S] cluster.

Its subcellular location is the cell inner membrane. The enzyme catalyses a quinone + NADH + 5 H(+)(in) = a quinol + NAD(+) + 4 H(+)(out). Its function is as follows. NDH-1 shuttles electrons from NADH, via FMN and iron-sulfur (Fe-S) centers, to quinones in the respiratory chain. The immediate electron acceptor for the enzyme in this species is believed to be ubiquinone. Couples the redox reaction to proton translocation (for every two electrons transferred, four hydrogen ions are translocated across the cytoplasmic membrane), and thus conserves the redox energy in a proton gradient. This chain is NADH-quinone oxidoreductase subunit I, found in Campylobacter jejuni subsp. doylei (strain ATCC BAA-1458 / RM4099 / 269.97).